Consider the following 525-residue polypeptide: Probable protein kinase UbiB (525 aa).

The 383-residue stretch at 118–500 (DFERVPVASA…QKRTNRLLQG (383 aa)) folds into the Protein kinase domain. ATP-binding positions include 124-132 (VASASIAQV) and lysine 150. Residue aspartate 285 is the Proton acceptor of the active site. A helical transmembrane segment spans residues 501 to 521 (LLLFGVAVGVGAVLARAFLAL).

The protein belongs to the ABC1 family. UbiB subfamily.

It is found in the cell inner membrane. Its pathway is cofactor biosynthesis; ubiquinone biosynthesis [regulation]. Functionally, is probably a protein kinase regulator of UbiI activity which is involved in aerobic coenzyme Q (ubiquinone) biosynthesis. This is Probable protein kinase UbiB from Paraburkholderia phytofirmans (strain DSM 17436 / LMG 22146 / PsJN) (Burkholderia phytofirmans).